Here is a 611-residue protein sequence, read N- to C-terminus: Mitochondrial distribution and morphology protein 34 (611 aa).

The SMP-LTD domain occupies 1–195; sequence MAFNFNWSPL…LPAIIHRLSL (195 aa). Over residues 325–342 the composition is skewed to polar residues; sequence SAPLSSQDTASVASSQSR. Disordered regions lie at residues 325–347, 361–402, 415–544, and 587–611; these read SAPL…GLPS, RHSK…STIT, SIIP…PTYT, and SYVG…AYRH. Residues 361 to 373 show a composition bias toward basic residues; sequence RHSKAHARKRKKR. 2 stretches are compositionally biased toward basic and acidic residues: residues 374–385 and 444–459; these read VIDLRPHRKPTD and TLRD…ERTN. The span at 520–529 shows a compositional bias: pro residues; it reads PLGPPAPAPI.

The protein belongs to the MDM34 family. In terms of assembly, component of the ER-mitochondria encounter structure (ERMES) or MDM complex, composed of MMM1, MDM10, MDM12 and MDM34.

It localises to the mitochondrion outer membrane. In terms of biological role, component of the ERMES/MDM complex, which serves as a molecular tether to connect the endoplasmic reticulum (ER) and mitochondria. Components of this complex are involved in the control of mitochondrial shape and protein biogenesis, and function in nonvesicular lipid trafficking between the ER and mitochondria. MDM34 is required for the interaction of the ER-resident membrane protein MMM1 and the outer mitochondrial membrane-resident beta-barrel protein MDM10. The chain is Mitochondrial distribution and morphology protein 34 from Paracoccidioides brasiliensis (strain Pb18).